The chain runs to 353 residues: Guanine nucleotide-binding protein subunit alpha (353 aa).

G2 is lipidated: N-myristoyl glycine. C3 is lipidated: S-palmitoyl cysteine. The region spanning 32–353 (NEIKMLLLGA…QENLRLCGLI (322 aa)) is the G-alpha domain. The G1 motif stretch occupies residues 35–48 (KMLLLGAGESGKST). Positions 43, 44, 45, 46, 47, 48, 150, 175, 181, 203, 269, 270, 272, and 325 each coordinate GTP. Position 47 (S47) interacts with Mg(2+). The tract at residues 173 to 181 (DVLRSRVKT) is G2 motif. Mg(2+) is bound at residue T181. The tract at residues 196–205 (YRMFDVGGQR) is G3 motif. The segment at 265–272 (ILFLNKID) is G4 motif. Residues 323–328 (TCATDT) form a G5 motif region.

Belongs to the G-alpha family. G(q) subfamily. In terms of assembly, g proteins are composed of 3 units; alpha, beta and gamma. The alpha chain contains the guanine nucleotide binding site. Mg(2+) serves as cofactor.

Guanine nucleotide-binding proteins (G proteins) are involved as modulators or transducers in various transmembrane signaling systems. Involved in the mating pathway. The protein is Guanine nucleotide-binding protein subunit alpha (CGA1) of Cochliobolus heterostrophus (strain C4 / ATCC 48331 / race T) (Southern corn leaf blight fungus).